We begin with the raw amino-acid sequence, 146 residues long: Heat-stable 19 kDa antigen (146 aa).

A signal peptide spans 1 to 20; sequence MKFSLLSAIAAAVFVPFTSA.

This sequence belongs to the cerato-platanin family. Post-translationally, glycosylated.

Its subcellular location is the secreted. The sequence is that of Heat-stable 19 kDa antigen (CSA) from Coccidioides immitis (strain RS) (Valley fever fungus).